The chain runs to 487 residues: Glutamyl-tRNA(Gln) amidotransferase subunit A (487 aa).

Residues K77 and S152 each act as charge relay system in the active site. S176 serves as the catalytic Acyl-ester intermediate.

Belongs to the amidase family. GatA subfamily. In terms of assembly, heterotrimer of A, B and C subunits.

The enzyme catalyses L-glutamyl-tRNA(Gln) + L-glutamine + ATP + H2O = L-glutaminyl-tRNA(Gln) + L-glutamate + ADP + phosphate + H(+). In terms of biological role, allows the formation of correctly charged Gln-tRNA(Gln) through the transamidation of misacylated Glu-tRNA(Gln) in organisms which lack glutaminyl-tRNA synthetase. The reaction takes place in the presence of glutamine and ATP through an activated gamma-phospho-Glu-tRNA(Gln). The protein is Glutamyl-tRNA(Gln) amidotransferase subunit A of Ligilactobacillus salivarius (strain UCC118) (Lactobacillus salivarius).